We begin with the raw amino-acid sequence, 508 residues long: Anthranilate synthase component 1 (508 aa).

L-tryptophan contacts are provided by residues serine 49 and 282-284 (PYM). 317–318 (GT) contacts chorismate. Glutamate 344 provides a ligand contact to Mg(2+). Residues tyrosine 432, arginine 452, 466 to 468 (GAG), and glycine 468 each bind chorismate. Residue glutamate 481 coordinates Mg(2+).

This sequence belongs to the anthranilate synthase component I family. As to quaternary structure, heterotetramer consisting of two non-identical subunits: a beta subunit (TrpG) and a large alpha subunit (TrpE). Mg(2+) is required as a cofactor.

It carries out the reaction chorismate + L-glutamine = anthranilate + pyruvate + L-glutamate + H(+). It participates in amino-acid biosynthesis; L-tryptophan biosynthesis; L-tryptophan from chorismate: step 1/5. With respect to regulation, feedback inhibited by tryptophan. In terms of biological role, part of a heterotetrameric complex that catalyzes the two-step biosynthesis of anthranilate, an intermediate in the biosynthesis of L-tryptophan. In the first step, the glutamine-binding beta subunit (TrpG) of anthranilate synthase (AS) provides the glutamine amidotransferase activity which generates ammonia as a substrate that, along with chorismate, is used in the second step, catalyzed by the large alpha subunit of AS (TrpE) to produce anthranilate. In the absence of TrpG, TrpE can synthesize anthranilate directly from chorismate and high concentrations of ammonia. The chain is Anthranilate synthase component 1 (trpE) from Bacillus caldotenax.